Consider the following 30-residue polypeptide: Thermophilic aminopeptidase 1 alpha chain (30 aa).

Belongs to the peptidase M42 family. 12 chains of two different but homologous types, alpha and beta, which can combine in various ratios. Requires a divalent metal cation as cofactor.

Metalloenzyme of broad specificity, releasing all N-terminal amino acids. In Geobacillus stearothermophilus (Bacillus stearothermophilus), this protein is Thermophilic aminopeptidase 1 alpha chain.